Here is a 93-residue protein sequence, read N- to C-terminus: Large ribosomal subunit protein bL27 (93 aa).

Residues 1–10 constitute a propeptide that is removed on maturation; it reads MRFLLGLQYF. Residues 14-36 are disordered; that stretch reads KGVGSTKNGRDSESKRLGAKKSD. Residues 21–36 are compositionally biased toward basic and acidic residues; that stretch reads NGRDSESKRLGAKKSD.

This sequence belongs to the bacterial ribosomal protein bL27 family. In terms of processing, the N-terminus is cleaved by ribosomal processing cysteine protease Prp.

In Mycoplasma capricolum subsp. capricolum (strain California kid / ATCC 27343 / NCTC 10154), this protein is Large ribosomal subunit protein bL27.